Reading from the N-terminus, the 445-residue chain is Xylose isomerase (445 aa).

Residues H107 and D110 contribute to the active site. Residues E238, E274, H277, D302, D313, D315, and D345 each contribute to the Mg(2+) site.

The protein belongs to the xylose isomerase family. In terms of assembly, homotetramer. Mg(2+) serves as cofactor.

The protein localises to the cytoplasm. The enzyme catalyses alpha-D-xylose = alpha-D-xylulofuranose. The protein is Xylose isomerase (xylA) of Priestia megaterium (strain DSM 319 / IMG 1521) (Bacillus megaterium).